Reading from the N-terminus, the 66-residue chain is Large ribosomal subunit protein bL35 (66 aa).

Residues 1–26 (MPKMKTHRGAAKRFKKTGTGKLKRGH) are compositionally biased toward basic residues. The disordered stretch occupies residues 1 to 48 (MPKMKTHRGAAKRFKKTGTGKLKRGHAYTSHLFANKTQKQKRKLRKAT).

Belongs to the bacterial ribosomal protein bL35 family.

The protein is Large ribosomal subunit protein bL35 of Geobacillus sp. (strain WCH70).